The following is a 278-amino-acid chain: Complement component 1 Q subcomponent-binding protein, mitochondrial (278 aa).

The N-terminal 70 residues, 1 to 70, are a transit peptide targeting the mitochondrion; the sequence is MFQLLRCVPR…PCACGCGCSG (70 aa). Residues 73–90 form a C1q binding region; that stretch reads TEGDKAFVDFLSDEIKEE. Ser-84 carries the post-translational modification Phosphoserine. N6-acetyllysine is present on residues Lys-88 and Lys-91. The segment at 136–164 is disordered; sequence IPPAFGGEEEEPSQGQKAEEQEPELTSTP. An interaction with MAVS region spans residues 166 to 209; that stretch reads FVVEVTKDGSSKALVLDCHYPEDEIGQEDDQSDIFSIKEVSFQA. Tyr-185 carries the post-translational modification Phosphotyrosine. A phosphoserine mark is found at Ser-197 and Ser-201. Thr-210 carries the post-translational modification Phosphothreonine.

It belongs to the MAM33 family. In terms of assembly, homotrimer; three monomers form a donut-shaped structure with an unusually asymmetric charge distribution on the surface. Interacts with CDK13, HRK, VTN, NFYB, ADRA1B, FOXC1, DDX21, DDX50, NCL, SRSF1 and SRSF9. Interacts with CD93; the association may represent a cell surface C1q receptor. Interacts with KRT1; the association represents a cell surface kininogen receptor. Interacts with CD209; the interaction is indicative for a C1q:C1QBP:CD209 signaling complex. Interacts with FBL and RRP1; the respective interactions with C1QBP are competitive. Probably associates with the mitoribosome. Interacts with MAVS; the interaction occurs upon viral transfection. Interacts with PPIF. Interacts with U2AF1L4. Interacts with PLEKHN1. Interacts with VGF-derived peptide TLQP-21. Interacts with MRE11 and RAD50; forming the MRC (MRE11-RAD50-C1QBP) complex that inhibits the activity of MRE11.

The protein localises to the mitochondrion matrix. Its subcellular location is the nucleus. It localises to the cell membrane. It is found in the secreted. The protein resides in the cytoplasm. The protein localises to the nucleolus. Functionally, multifunctional and multicompartmental protein involved in inflammation and infection processes, ribosome biogenesis, protein synthesis in mitochondria, regulation of apoptosis, transcriptional regulation and pre-mRNA splicing. At the cell surface is thought to act as an endothelial receptor for plasma proteins of the complement and kallikrein-kinin cascades. Putative receptor for C1q; specifically binds to the globular 'heads' of C1q thus inhibiting C1; may perform the receptor function through a complex with C1qR/CD93. In complex with cytokeratin-1/KRT1 is a high affinity receptor for kininogen-1/HMWK. Can also bind other plasma proteins, such as coagulation factor XII leading to its autoactivation. May function to bind initially fluid kininogen-1 to the cell membrane. The secreted form may enhance both extrinsic and intrinsic coagulation pathways. It is postulated that the cell surface form requires docking with transmembrane proteins for downstream signaling which might be specific for a cell-type or response. By acting as C1q receptor is involved in chemotaxis of immature dendritic cells and neutrophils and is proposed to signal through CD209/DC-SIGN on immature dendritic cells, through integrin alpha-4/beta-1 during trophoblast invasion of the decidua, and through integrin beta-1 during endothelial cell adhesion and spreading. Signaling involved in inhibition of innate immune response is implicating the PI3K-AKT/PKB pathway. Required for protein synthesis in mitochondria. In mitochondrial translation may be involved in formation of functional 55S mitoribosomes; the function seems to involve its RNA-binding activity. Acts as a RNA modification reader, which specifically recognizes and binds mitochondrial RNAs modified by C5-methylcytosine (m5C) in response to stress, and promotes recruitment of the mitochondrial degradosome complex, leading to their degradation. May be involved in the nucleolar ribosome maturation process; the function may involve the exchange of FBL for RRP1 in the association with pre-ribosome particles. Involved in regulation of RNA splicing by inhibiting the RNA-binding capacity of SRSF1 and its phosphorylation. Is required for the nuclear translocation of splicing factor U2AF1L4. Involved in regulation of CDKN2A- and HRK-mediated apoptosis. Stabilizes mitochondrial CDKN2A isoform smARF. May be involved in regulation of FOXC1 transcriptional activity and NFY/CCAAT-binding factor complex-mediated transcription. May play a role in antibacterial defense as it can bind to cell surface hyaluronan and inhibit Streptococcus pneumoniae hyaluronate lyase. May be involved in modulation of the immune response; ligation by HCV core protein is resulting in suppression of interleukin-12 production in monocyte-derived dendritic cells. Involved in regulation of antiviral response by inhibiting RIGI- and IFIH1-mediated signaling pathways probably involving its association with MAVS after viral infection. Acts as a regulator of DNA repair via homologous recombination by inhibiting the activity of MRE11: interacts with unphosphorylated MRE11 and RAD50 in absence of DNA damage, preventing formation and activity of the MRN complex. Following DNA damage, dissociates from phosphorylated MRE11, allowing formation of the MRN complex. The chain is Complement component 1 Q subcomponent-binding protein, mitochondrial (C1QBP) from Bos taurus (Bovine).